A 270-amino-acid chain; its full sequence is Phosphatidylglycerol--prolipoprotein diacylglyceryl transferase (270 aa).

Transmembrane regions (helical) follow at residues 10–30 (VAVAIGPLQIHWYGLMYLVGI), 56–76 (LIFWLAMGVIVGGRLGYVLFY), 92–112 (WKGGMAFHGGFVGVMIAAWWF), 120–140 (FFQLMDFVAPLVPIGLGAGRI), 175–195 (SQLYQFALEGVALFIILNLYA), 202–222 (MAVSGMFALFYGIFRFVVEFV), and 237–257 (VTMGQILSLPMIIAGLFLIWL). Residue R139 participates in a 1,2-diacyl-sn-glycero-3-phospho-(1'-sn-glycerol) binding.

The protein belongs to the Lgt family.

It is found in the cell inner membrane. It carries out the reaction L-cysteinyl-[prolipoprotein] + a 1,2-diacyl-sn-glycero-3-phospho-(1'-sn-glycerol) = an S-1,2-diacyl-sn-glyceryl-L-cysteinyl-[prolipoprotein] + sn-glycerol 1-phosphate + H(+). It functions in the pathway protein modification; lipoprotein biosynthesis (diacylglyceryl transfer). Its function is as follows. Catalyzes the transfer of the diacylglyceryl group from phosphatidylglycerol to the sulfhydryl group of the N-terminal cysteine of a prolipoprotein, the first step in the formation of mature lipoproteins. This Pseudomonas syringae pv. tomato (strain ATCC BAA-871 / DC3000) protein is Phosphatidylglycerol--prolipoprotein diacylglyceryl transferase.